A 399-amino-acid chain; its full sequence is Mitochondrial glycine transporter (399 aa).

Solcar repeat units follow at residues 35-137 (IPPY…LRSV), 164-251 (LSTT…CKTN), and 266-374 (GNWM…GRSW). A run of 6 helical transmembrane segments spans residues 41–66 (LAFGALSGFASCVLLQPFDLLKTRLQ), 112–138 (GTAPTVIRNVPGVALYFYSVSHLRSVA), 170–195 (LLTGAVARVTVGFILSPVTVVKARFE), 226–249 (GFTATALRDAPYAGLYLALYEACK), 270–296 (VVSASGLLAGTLATLLTHPFDIIKTRM), and 349–367 (GLGLRCARKAASSAIGWSI). The interval 379–399 (EASSSAQEAGTGTRLLDHKQV) is disordered.

The protein belongs to the mitochondrial carrier (TC 2.A.29) family. SLC25A38 subfamily.

It localises to the mitochondrion inner membrane. The catalysed reaction is glycine(in) = glycine(out). Mitochondrial glycine transporter that imports glycine into the mitochondrial matrix. Plays an important role in providing glycine for the first enzymatic step in heme biosynthesis, the condensation of glycine with succinyl-CoA to produce 5-aminolevulinate (ALA) in the mitochondrial matrix. This is Mitochondrial glycine transporter from Mycosarcoma maydis (Corn smut fungus).